The following is a 353-amino-acid chain: Lactosylceramide 4-alpha-galactosyltransferase (353 aa).

Residues 1–22 are Cytoplasmic-facing; it reads MSKPPDLLLRLLRGAPRQRVCT. The helical; Signal-anchor for type II membrane protein transmembrane segment at 23–43 threads the bilayer; the sequence is LFIIGFKFTFFVSIMIYWHVV. At 44–353 the chain is on the lumenal side; it reads GEPKEKGQLY…TTHEAMKMYL (310 aa). Residue Asn121 is glycosylated (N-linked (GlcNAc...) asparagine). The DXD motif motif lies at 192 to 194; sequence DTD. Asn203 carries an N-linked (GlcNAc...) asparagine glycan.

This sequence belongs to the glycosyltransferase 32 family. Ubiquitous. Highly expressed in kidney, heart, spleen, liver, testis and placenta.

The protein resides in the golgi apparatus membrane. It carries out the reaction a beta-D-Gal-(1-&gt;4)-beta-D-Glc-(1&lt;-&gt;1)-Cer(d18:1(4E)) + UDP-alpha-D-galactose = a globoside Gb3Cer (d18:1(4E)) + UDP + H(+). The enzyme catalyses a beta-D-Gal-(1&lt;-&gt;1')-ceramide + UDP-alpha-D-galactose = alpha-D-Gal-(1-&gt;4)-beta-D-Gal-(1&lt;-&gt;1')-Cer + UDP + H(+). Its pathway is glycolipid biosynthesis. In terms of biological role, catalyzes the transfer of galactose from UDP-alpha-D-galactose to lactosylceramide/beta-D-galactosyl-(1-&gt;4)-beta-D-glucosyl-(1&lt;-&gt;1)-ceramide(d18:1(4E)) to produce globotriaosylceramide/globoside Gb3Cer (d18:1(4E)). Also able to transfer galactose to galactosylceramide/beta-D-Gal-(1&lt;-&gt;1')-Cer. Globoside Gb3Cer is a glycosphingolipid of the globo serie, one of the major types of neutral root structures of glycosphingolipids, that constitute a significant portion of mammalian cell membranes. Globotriaosylceramide/globoside Gb3Cer in blood and tissue cell membranes is the antigen Pk of blood histogroup P. Functionally, (Microbial infection) Globotriaosylceramide is one of the cellular ligands for bacterial verotoxins. The protein is Lactosylceramide 4-alpha-galactosyltransferase (A4GALT) of Homo sapiens (Human).